The primary structure comprises 510 residues: GMP synthase [glutamine-hydrolyzing] (510 aa).

The Glutamine amidotransferase type-1 domain maps to 3 to 194; the sequence is QILILDFGSQ…ARVICGYKEK (192 aa). The active-site Nucleophile is Cys80. Catalysis depends on residues His168 and Glu170. The 191-residue stretch at 195–385 folds into the GMPS ATP-PPase domain; that stretch reads WTPASIMTAS…LGLGSEIVDI (191 aa). Residue 222–228 participates in ATP binding; the sequence is SGGVDSS.

As to quaternary structure, homodimer.

The enzyme catalyses XMP + L-glutamine + ATP + H2O = GMP + L-glutamate + AMP + diphosphate + 2 H(+). It participates in purine metabolism; GMP biosynthesis; GMP from XMP (L-Gln route): step 1/1. Functionally, catalyzes the synthesis of GMP from XMP. The chain is GMP synthase [glutamine-hydrolyzing] from Elusimicrobium minutum (strain Pei191).